The chain runs to 180 residues: Shikimate kinase (180 aa).

14–19 (GAGKTC) is a binding site for ATP. Thr18 serves as a coordination point for Mg(2+). The substrate site is built by Asp36, Arg60, and Gly82. Arg120 lines the ATP pocket. Residue Arg139 coordinates substrate.

Belongs to the shikimate kinase family. In terms of assembly, monomer. The cofactor is Mg(2+).

It is found in the cytoplasm. It carries out the reaction shikimate + ATP = 3-phosphoshikimate + ADP + H(+). It functions in the pathway metabolic intermediate biosynthesis; chorismate biosynthesis; chorismate from D-erythrose 4-phosphate and phosphoenolpyruvate: step 5/7. Catalyzes the specific phosphorylation of the 3-hydroxyl group of shikimic acid using ATP as a cosubstrate. The protein is Shikimate kinase of Stenotrophomonas maltophilia (strain K279a).